Consider the following 209-residue polypeptide: Uracil phosphoribosyltransferase (209 aa).

5-phospho-alpha-D-ribose 1-diphosphate is bound by residues arginine 79, arginine 104, and 131-139 (DPMLATGGS). Residues isoleucine 194 and 199 to 201 (GDA) contribute to the uracil site. Residue aspartate 200 coordinates 5-phospho-alpha-D-ribose 1-diphosphate.

This sequence belongs to the UPRTase family. Mg(2+) is required as a cofactor.

The catalysed reaction is UMP + diphosphate = 5-phospho-alpha-D-ribose 1-diphosphate + uracil. It participates in pyrimidine metabolism; UMP biosynthesis via salvage pathway; UMP from uracil: step 1/1. With respect to regulation, allosterically activated by GTP. Functionally, catalyzes the conversion of uracil and 5-phospho-alpha-D-ribose 1-diphosphate (PRPP) to UMP and diphosphate. This is Uracil phosphoribosyltransferase from Streptococcus pneumoniae (strain ATCC BAA-255 / R6).